The primary structure comprises 21 residues: Tricyclic peptide MS-271 (21 aa).

The segment at residues 1 to 9 (CLGVGSCND) is a cross-link (3-cysteinyl-aspartic acid (Cys-Asp)). Cystine bridges form between cysteine 1/cysteine 13 and cysteine 7/cysteine 19. Position 21 is a D-tryptophan (tryptophan 21).

Its function is as follows. Inhibits chicken myosin light chain kinase with an IC(50) of 8 M. Does not inhibit bovine cAMP-dependent protein kinase or rat protein kinase C. Antibacterial activity against the Gram-positive bacteria B.subtilis, E.faecium and S.aureus. No antibacterial activity against the Gram-negative bacteria E.coli, K.pneumoniae, P.aeruginosa, P.vulgaris, S.sonnei and S.typhosa. No antifungal activity against C.albicans. The chain is Tricyclic peptide MS-271 from Streptomyces sp.